Here is a 281-residue protein sequence, read N- to C-terminus: Elongation factor 1-delta (281 aa).

An N-acetylalanine modification is found at Ala-2. Lys-17 is subject to N6-acetyllysine. 5 positions are modified to phosphoserine: Ser-37, Ser-44, Ser-60, Ser-86, and Ser-106. The segment at 80-115 (LIVRIASLEVENQNLRGVVQDLQQAISKLEVRLSTL) is leucine-zipper. Lys-107 carries the post-translational modification N6-acetyllysine. A compositionally biased stretch (polar residues) spans 115-132 (LEKSSPTHRATAPQTQHV). The tract at residues 115–172 (LEKSSPTHRATAPQTQHVSPMRQVEPPAKKGATPAEDDEDNDIDLFGSDEEEEDKEAA) is disordered. Lys-117 carries the N6-acetyllysine; alternate modification. Lys-117 carries the post-translational modification N6-succinyllysine; alternate. Ser-119 is subject to Phosphoserine. Residue Thr-129 is modified to Phosphothreonine. Ser-133 is subject to Phosphoserine. Thr-147 carries the phosphothreonine modification. Residues 149–169 (AEDDEDNDIDLFGSDEEEEDK) are compositionally biased toward acidic residues. Ser-162 carries the phosphoserine; by CK2 modification. The interval 173-281 (RLREERLRQY…SVDIAAFNKI (109 aa)) is catalytic (GEF).

Belongs to the EF-1-beta/EF-1-delta family. In terms of assembly, EF-1 is composed of 4 subunits: alpha, beta, delta isoform 1, and gamma. Isoform 2 interacts with HSF1 and NFE2L2.

Its subcellular location is the nucleus. Its function is as follows. EF-1-beta and EF-1-delta stimulate the exchange of GDP bound to EF-1-alpha to GTP, regenerating EF-1-alpha for another round of transfer of aminoacyl-tRNAs to the ribosome. In terms of biological role, regulates induction of heat-shock-responsive genes through association with heat shock transcription factors and direct DNA-binding at heat shock promoter elements (HSE). The protein is Elongation factor 1-delta (Eef1d) of Rattus norvegicus (Rat).